The chain runs to 316 residues: tRNA uridine(34) hydroxylase (316 aa).

The region spanning 136 to 230 (ADENTVVVDK…YLEEVPREQS (95 aa)) is the Rhodanese domain. Cys-190 (cysteine persulfide intermediate) is an active-site residue.

The protein belongs to the TrhO family.

The enzyme catalyses uridine(34) in tRNA + AH2 + O2 = 5-hydroxyuridine(34) in tRNA + A + H2O. Catalyzes oxygen-dependent 5-hydroxyuridine (ho5U) modification at position 34 in tRNAs. This chain is tRNA uridine(34) hydroxylase, found in Brucella abortus (strain 2308).